The following is a 369-amino-acid chain: RNA pseudouridine synthase 5 (369 aa).

The S4 RNA-binding domain maps to 47–104 (APLLGWIQRIQNGQIQIDGEVVKDPNTLLRSGSKLVYSRLPWKEPDTPYSLEVLYEDD).

Belongs to the pseudouridine synthase RluA family.

It catalyses the reaction a uridine in RNA = a pseudouridine in RNA. This chain is RNA pseudouridine synthase 5, found in Arabidopsis thaliana (Mouse-ear cress).